Consider the following 302-residue polypeptide: NAD kinase 2 (302 aa).

Residue D78 is the Proton acceptor of the active site. NAD(+) contacts are provided by residues 78 to 79 (DG), 152 to 153 (NE), D182, 193 to 198 (TAYALS), and A217.

This sequence belongs to the NAD kinase family. A divalent metal cation serves as cofactor.

Its subcellular location is the cytoplasm. The catalysed reaction is NAD(+) + ATP = ADP + NADP(+) + H(+). In terms of biological role, involved in the regulation of the intracellular balance of NAD and NADP, and is a key enzyme in the biosynthesis of NADP. Catalyzes specifically the phosphorylation on 2'-hydroxyl of the adenosine moiety of NAD to yield NADP. The sequence is that of NAD kinase 2 from Parasynechococcus marenigrum (strain WH8102).